The primary structure comprises 239 residues: Large ribosomal subunit protein uL2 (239 aa).

Residues 202–239 are disordered; the sequence is HGGGSHQHVGRPSTVARNTPPGRKVGHIAARRTGRRKG. Basic residues predominate over residues 225 to 239; it reads KVGHIAARRTGRRKG.

It belongs to the universal ribosomal protein uL2 family. Part of the 50S ribosomal subunit. Forms a bridge to the 30S subunit in the 70S ribosome.

Its function is as follows. One of the primary rRNA binding proteins. Required for association of the 30S and 50S subunits to form the 70S ribosome, for tRNA binding and peptide bond formation. It has been suggested to have peptidyltransferase activity; this is somewhat controversial. Makes several contacts with the 16S rRNA in the 70S ribosome. The sequence is that of Large ribosomal subunit protein uL2 from Desulfurococcus amylolyticus (strain DSM 18924 / JCM 16383 / VKM B-2413 / 1221n) (Desulfurococcus kamchatkensis).